We begin with the raw amino-acid sequence, 421 residues long: 4-hydroxy-3-methylbut-2-en-1-yl diphosphate synthase (flavodoxin) (421 aa).

Positions 311, 314, 357, and 364 each coordinate [4Fe-4S] cluster.

It belongs to the IspG family. [4Fe-4S] cluster is required as a cofactor.

It catalyses the reaction (2E)-4-hydroxy-3-methylbut-2-enyl diphosphate + oxidized [flavodoxin] + H2O + 2 H(+) = 2-C-methyl-D-erythritol 2,4-cyclic diphosphate + reduced [flavodoxin]. Its pathway is isoprenoid biosynthesis; isopentenyl diphosphate biosynthesis via DXP pathway; isopentenyl diphosphate from 1-deoxy-D-xylulose 5-phosphate: step 5/6. Functionally, converts 2C-methyl-D-erythritol 2,4-cyclodiphosphate (ME-2,4cPP) into 1-hydroxy-2-methyl-2-(E)-butenyl 4-diphosphate. This is 4-hydroxy-3-methylbut-2-en-1-yl diphosphate synthase (flavodoxin) from Xanthomonas euvesicatoria pv. vesicatoria (strain 85-10) (Xanthomonas campestris pv. vesicatoria).